A 247-amino-acid chain; its full sequence is (7aS)-7a-methyl-1,5-dioxo-2,3,5,6,7,7a-hexahydro-1H-indene-carboxyl-CoA hydrolase (247 aa).

The protein belongs to the enoyl-CoA hydratase/isomerase family.

It catalyses the reaction (7aS)-7a-methyl-1,5-dioxo-2,3,5,6,7,7a-hexahydro-1H-indene-carboxyl-CoA + H2O = (3E)-2-(2-carboxylatoethyl)-3-methyl-6-oxocyclohex-1-ene-1-carboxyl-CoA + H(+). It participates in steroid metabolism; cholesterol degradation. Functionally, involved in the final steps of cholesterol and steroid degradation. Catalyzes the hydrolytic ring D opening of (7aS)-7a-methyl-1,5-dioxo-2,3,5,6,7,7a-hexahydro-1H-indene-carboxyl-CoA (HIEC-CoA) to (3E)-2-(2-carboxylatoethyl)-3-methyl-6-oxocyclohex-1-ene-1-carboxyl-CoA (COCHEA-CoA). The chain is (7aS)-7a-methyl-1,5-dioxo-2,3,5,6,7,7a-hexahydro-1H-indene-carboxyl-CoA hydrolase from Mycobacterium tuberculosis (strain ATCC 25618 / H37Rv).